We begin with the raw amino-acid sequence, 434 residues long: Trigger factor (434 aa).

The PPIase FKBP-type domain occupies 161–246; sequence EDRATIDFTG…LKKVEERELP (86 aa).

The protein belongs to the FKBP-type PPIase family. Tig subfamily.

The protein resides in the cytoplasm. The enzyme catalyses [protein]-peptidylproline (omega=180) = [protein]-peptidylproline (omega=0). In terms of biological role, involved in protein export. Acts as a chaperone by maintaining the newly synthesized protein in an open conformation. Functions as a peptidyl-prolyl cis-trans isomerase. The protein is Trigger factor of Pectobacterium atrosepticum (strain SCRI 1043 / ATCC BAA-672) (Erwinia carotovora subsp. atroseptica).